A 131-amino-acid polypeptide reads, in one-letter code: Thrombocorticin (131 aa).

A disulfide bridge connects residues cysteine 3 and cysteine 111. Positions 28 to 60 (RNESVEVKDSNGNTVSRGSGSSSSGGTFTVINM) are disordered. The segment covering 37–54 (SNGNTVSRGSGSSSSGGT) has biased composition (low complexity). Residues 117–131 (DFNDVFVLITGLVRG) carry the Pseudodomain-swapping motif motif.

Its function is as follows. Binds to fucose and mannose in a calcium-dependent manner (in vitro). Acts as an agonist for human thrombopoietin receptor MPL (in vitro). Binding of sugar-moieties may promote the interaction with human MPL on the cell surface (in vitro). Catalyzes MPL dimerization and activation, and modulates internalization of the receptor (in vitro). Exhibits proliferation activity in murine recombinant Ba/F3 cells expressing human MPL (Ba/F3-huMPL) (in vitro). Induces phosphorylation of STAT5 in recombinant Ba/F3-huMPL cells, possibly by stimulating MPL on the cell surface to transduce signals via Jak/STAT signaling pathway (in vitro). Does not aggregate rabbit erythrocytes, indicating absent lectin-like agglutination activity (in vitro). The protein is Thrombocorticin of Corticium sp. (Marine sponge).